Reading from the N-terminus, the 523-residue chain is Pentatricopeptide repeat-containing protein At1g52640, mitochondrial (523 aa).

Residues 1–5 constitute a mitochondrion transit peptide; that stretch reads MAIRT. PPR repeat units follow at residues 101–135, 137–171, 172–206, 207–241, 242–276, 277–311, 312–346, 347–381, 382–416, and 417–452; these read SLES…NYFE, SSKV…GIKP, CVDD…GIVP, SAKT…NCVV, DLLA…GLKP, DAYS…DLVP, NVYT…GANP, DTWT…KCLP, DRHT…KFYP, and TVAT…GIPP. A disordered region spans residues 498–523; that stretch reads KRRRLGRRSENSEDDDDDFELERDTI. Over residues 509–523 the composition is skewed to acidic residues; it reads SEDDDDDFELERDTI.

It belongs to the PPR family. P subfamily.

The protein localises to the mitochondrion. This Arabidopsis thaliana (Mouse-ear cress) protein is Pentatricopeptide repeat-containing protein At1g52640, mitochondrial.